The primary structure comprises 20 residues: IVPFLLGMVPKLICLITKKC.

Met-8 carries the methionine sulfoxide; partial modification. A disulfide bridge connects residues Cys-14 and Cys-20.

Belongs to the frog skin active peptide (FSAP) family. Brevinin subfamily. As to expression, expressed by the skin glands.

Its subcellular location is the secreted. In terms of biological role, antimicrobial peptide. This chain is Brevinin-1ITb, found in Rana italica (Italian stream frog).